We begin with the raw amino-acid sequence, 382 residues long: Galactokinase (382 aa).

Substrate is bound at residue 34 to 37 (EHTD). Residue 124–130 (GAGLSSS) coordinates ATP. Residues Ser-130 and Glu-162 each coordinate Mg(2+). The Proton acceptor role is filled by Asp-174. Residue Tyr-223 coordinates substrate.

This sequence belongs to the GHMP kinase family. GalK subfamily.

It is found in the cytoplasm. The catalysed reaction is alpha-D-galactose + ATP = alpha-D-galactose 1-phosphate + ADP + H(+). The protein operates within carbohydrate metabolism; galactose metabolism. Functionally, catalyzes the transfer of the gamma-phosphate of ATP to D-galactose to form alpha-D-galactose-1-phosphate (Gal-1-P). The chain is Galactokinase from Salmonella gallinarum (strain 287/91 / NCTC 13346).